Here is a 213-residue protein sequence, read N- to C-terminus: MASLFKKKTVDDVIKEQNRELRGTQRAIIRDRAALEKQEKQLELEIKKMAKIGNKEACRVLAKQLVHLRKQKTRTFAVSSKVTSMSTQTKVMNSQMKMAGAMSTTAKTMQAVNKKMDPQKTLQTMQNFQKENMKMEMTEEMINDTLDDIFDGSDDEEESQDIVNQVLDEIGIEISGKMAKAPSAARSLPSASTSKATISDEEIERQLKALGVD.

N-acetylalanine is present on Ala2. Residues 25–55 adopt a coiled-coil conformation; sequence QRAIIRDRAALEKQEKQLELEIKKMAKIGNK. The span at 179-194 shows a compositional bias: low complexity; the sequence is AKAPSAARSLPSASTS. A disordered region spans residues 179–199; sequence AKAPSAARSLPSASTSKATIS. Phosphoserine is present on Ser199. Positions 201 to 211 match the MIT-interacting motif motif; the sequence is EEIERQLKALG.

The protein belongs to the SNF7 family. As to quaternary structure, probable core component of the endosomal sorting required for transport complex III (ESCRT-III). ESCRT-III components are thought to multimerize to form a flat lattice on the perimeter membrane of the endosome. Several assembly forms of ESCRT-III may exist that interact and act sequentially. Interacts with CHMP2A. Interacts with VPS4A. Interacts with VPS4B; the interaction is direct. In terms of tissue distribution, in brain, it is expressed in all neuronal populations with a relatively enhanced expression in the hippocampus, frontal and temporal lobes and in both granule and Purkinje cells of the cerebellum. Not expressed in astrocytes or oligodendrocytes.

It is found in the cytoplasm. The protein localises to the cytosol. Its subcellular location is the late endosome membrane. Probable core component of the endosomal sorting required for transport complex III (ESCRT-III) which is involved in multivesicular bodies (MVBs) formation and sorting of endosomal cargo proteins into MVBs. MVBs contain intraluminal vesicles (ILVs) that are generated by invagination and scission from the limiting membrane of the endosome and mostly are delivered to lysosomes enabling degradation of membrane proteins, such as stimulated growth factor receptors, lysosomal enzymes and lipids. The MVB pathway appears to require the sequential function of ESCRT-O, -I,-II and -III complexes. ESCRT-III proteins mostly dissociate from the invaginating membrane before the ILV is released. The ESCRT machinery also functions in topologically equivalent membrane fission events, such as the terminal stages of cytokinesis. ESCRT-III proteins are believed to mediate the necessary vesicle extrusion and/or membrane fission activities, possibly in conjunction with the AAA ATPase VPS4. The sequence is that of Charged multivesicular body protein 2b (Chmp2b) from Mus musculus (Mouse).